A 427-amino-acid polypeptide reads, in one-letter code: MKRVRVIGAGISGSEACYQLLKRNYLVELFEVKSIKKNPIQTNDMFANLAYSDSFHSNEITSAKGLLKQEMRLLDSLIINAADYAKVANEPLLVDRYKFQEYITNYLRSHQNLKIIEKEYITIDDSVPTIIATGPLSSVNLENEIKNLVGESNFNLFDKVEPIVLKSSINLNYVQKSALDDKLFYCTLNKNEFEYLYNLIISAEIFVSPLPNEIKLLHDNGFRSIETVAKSSKNELKNLLQANEIRQTENTYATVLLREDDYNENFLRIVNFQTSIKIPWQNEIIKAVPALANALILRYGVMHKNDYINSANVLDDNFQLKSNPNIFFAGQLTGTDGYVEASASAIICAINVDRYLRNLPKAIPNNKTVIGSLCNYVLIANKEDFQPMEANWGLVESMNLVSYNNEGKKKLSDRAISEIKEFIKQNL.

8 to 13 lines the FAD pocket; it reads GAGISG.

This sequence belongs to the MnmG family. TrmFO subfamily. Requires FAD as cofactor.

Its subcellular location is the cytoplasm. The catalysed reaction is uridine(54) in tRNA + (6R)-5,10-methylene-5,6,7,8-tetrahydrofolate + NADH + H(+) = 5-methyluridine(54) in tRNA + (6S)-5,6,7,8-tetrahydrofolate + NAD(+). It carries out the reaction uridine(54) in tRNA + (6R)-5,10-methylene-5,6,7,8-tetrahydrofolate + NADPH + H(+) = 5-methyluridine(54) in tRNA + (6S)-5,6,7,8-tetrahydrofolate + NADP(+). Its function is as follows. Catalyzes the folate-dependent formation of 5-methyl-uridine at position 54 (M-5-U54) in all tRNAs. The polypeptide is Methylenetetrahydrofolate--tRNA-(uracil-5-)-methyltransferase TrmFO (Mycoplasmopsis agalactiae (strain NCTC 10123 / CIP 59.7 / PG2) (Mycoplasma agalactiae)).